The sequence spans 312 residues: MLSSLLITQFIYGTISTIIYSLTVVFLTKNWKHFDNYFLKLYICQFFFNMWMYWNFYITSRLPASTCKDCYLSGWFDSLSKDSGSMFPFKFFIFCQYHLGFMSYSNLFLTSINRFTLIFMPKRYFQIWHYGTYILIALIFITPILFTYPLLVHQAYLEYNPLSDTYVARTQADLPFLYSFILVWMVVTVLLSIIANIICWFKISKYSKAARQQSDYRLFLVSFVTFVINCGVFSIAMLNKISADIDPSKLLLSSRIAQLLSPFANDLLSLSTPYVLIIFSKRIRQSIKNLFIKGTVAPSSITPLQNIPASRI.

A run of 7 helical transmembrane segments spans residues 6–26, 38–58, 92–112, 132–152, 180–200, 218–238, and 259–279; these read LITQ…TVVF, FLKL…NFYI, FIFC…LTSI, TYIL…PLLV, FILV…IICW, LFLV…IAML, and LLSP…LIIF.

This sequence belongs to the nematode receptor-like protein srg family.

The protein localises to the membrane. The chain is Serpentine receptor class gamma-31 (srg-31) from Caenorhabditis elegans.